A 205-amino-acid polypeptide reads, in one-letter code: LexA repressor (205 aa).

A DNA-binding region (H-T-H motif) is located at residues 28–48 (IRDIMKHFNFKSPRAAHKHLI). Residues Ser-125 and Lys-163 each act as for autocatalytic cleavage activity in the active site.

Belongs to the peptidase S24 family. As to quaternary structure, homodimer.

The enzyme catalyses Hydrolysis of Ala-|-Gly bond in repressor LexA.. In terms of biological role, represses a number of genes involved in the response to DNA damage (SOS response), including recA and lexA. In the presence of single-stranded DNA, RecA interacts with LexA causing an autocatalytic cleavage which disrupts the DNA-binding part of LexA, leading to derepression of the SOS regulon and eventually DNA repair. The protein is LexA repressor of Petrotoga mobilis (strain DSM 10674 / SJ95).